We begin with the raw amino-acid sequence, 86 residues long: MAHKKAGGSTRNGRDSESKRLGVKRYGGQVVSAGEIIVRQRGTKFHAGVNAGMGKDHTIFAKETGRVKFEVKGPLNRKYVVIEPVA.

The segment at 1–24 (MAHKKAGGSTRNGRDSESKRLGVK) is disordered.

Belongs to the bacterial ribosomal protein bL27 family.

The chain is Large ribosomal subunit protein bL27 from Alcanivorax borkumensis (strain ATCC 700651 / DSM 11573 / NCIMB 13689 / SK2).